The sequence spans 241 residues: 1-(5-phosphoribosyl)-5-[(5-phosphoribosylamino)methylideneamino] imidazole-4-carboxamide isomerase (241 aa).

The Proton acceptor role is filled by Asp-8. Residue Asp-129 is the Proton donor of the active site.

Belongs to the HisA/HisF family.

Its subcellular location is the cytoplasm. The enzyme catalyses 1-(5-phospho-beta-D-ribosyl)-5-[(5-phospho-beta-D-ribosylamino)methylideneamino]imidazole-4-carboxamide = 5-[(5-phospho-1-deoxy-D-ribulos-1-ylimino)methylamino]-1-(5-phospho-beta-D-ribosyl)imidazole-4-carboxamide. It functions in the pathway amino-acid biosynthesis; L-histidine biosynthesis; L-histidine from 5-phospho-alpha-D-ribose 1-diphosphate: step 4/9. This is 1-(5-phosphoribosyl)-5-[(5-phosphoribosylamino)methylideneamino] imidazole-4-carboxamide isomerase from Rhodospirillum rubrum (strain ATCC 11170 / ATH 1.1.1 / DSM 467 / LMG 4362 / NCIMB 8255 / S1).